The primary structure comprises 533 residues: DnaJ homolog subfamily C member 21 (533 aa).

Positions 3 to 70 (CHYEALGVRR…ERAWYDNHRE (68 aa)) constitute a J domain. Disordered regions lie at residues 278 to 311 (QFGDGSGEDEAEDQELRDGQDGKDSDEAEDAELY), 327 to 473 (KAMR…RVPA), and 503 to 533 (KATGHARAPSSSTSLNSVTNSRNKKEKRKNR). 2 positions are modified to phosphoserine: S283 and S302. The segment covering 291 to 302 (QELRDGQDGKDS) has biased composition (basic and acidic residues). A C2H2-type 1 zinc finger spans residues 315–339 (YCPACDKSFKTEKAMRNHEKSKKHR). The span at 357-369 (SGPQTDENSLNAN) shows a compositional bias: polar residues. The residue at position 370 (S370) is a Phosphoserine. Residues 381–392 (KLSRKQKKKKQK) show a composition bias toward basic residues. The span at 393-403 (PAQNYDDNFNE) shows a compositional bias: polar residues. Residues 455 to 464 (SKPKGKKAKD) are compositionally biased toward basic residues. Residues 484-508 (SCTTCHSEFPSRNKLFDHLKATGHA) form a C2H2-type 2 zinc finger. S512 is subject to Phosphoserine. The span at 512–523 (SSSTSLNSVTNS) shows a compositional bias: low complexity. Residues 524–533 (RNKKEKRKNR) show a composition bias toward basic residues.

Interacts with HSPA8, PA2G4 and ZNF622.

It localises to the cytoplasm. The protein localises to the nucleus. It is found in the nucleolus. Its function is as follows. May act as a co-chaperone for HSP70. May play a role in ribosomal RNA (rRNA) biogenesis, possibly in the maturation of the 60S subunit. Binds the precursor 45S rRNA. The chain is DnaJ homolog subfamily C member 21 (DNAJC21) from Bos taurus (Bovine).